The primary structure comprises 224 residues: uncharacterized protein (224 aa).

The N-terminal stretch at 1–23 (MKKLLAAGIIGLLTVSIASPSFA) is a signal peptide. The VWFA domain occupies 31–224 (NVAVLFDGSG…WEKEAQKFTE (194 aa)).

To B.subtilis YwmC.

This is an uncharacterized protein from Bacillus subtilis (strain 168).